The sequence spans 507 residues: Glucose-6-phosphate isomerase (507 aa).

E338 acts as the Proton donor in catalysis. Active-site residues include H369 and K479.

This sequence belongs to the GPI family.

The protein localises to the cytoplasm. It carries out the reaction alpha-D-glucose 6-phosphate = beta-D-fructose 6-phosphate. It functions in the pathway carbohydrate biosynthesis; gluconeogenesis. Its pathway is carbohydrate degradation; glycolysis; D-glyceraldehyde 3-phosphate and glycerone phosphate from D-glucose: step 2/4. Provides a gateway for fructose into the Entner-Doudouroff pathway. In terms of biological role, catalyzes the reversible isomerization of glucose-6-phosphate to fructose-6-phosphate. This is Glucose-6-phosphate isomerase from Zymomonas mobilis subsp. mobilis (strain ATCC 31821 / ZM4 / CP4).